We begin with the raw amino-acid sequence, 1001 residues long: Translation initiation factor IF-2 (1001 aa).

The segment at 56–418 (PDYVHDPNAV…VEAGPPPISR (363 aa)) is disordered. A compositionally biased stretch (basic and acidic residues) spans 70 to 84 (TEAHEERHEHEEAHE). The segment covering 85 to 108 (PAAAPKAAVEPETPVAPAPEAAPA) has biased composition (low complexity). Basic and acidic residues predominate over residues 109–120 (AKEERPAPEEPA). Composition is skewed to pro residues over residues 136–170 (IHPP…PHAP), 180–194 (PARP…PSQT), 204–217 (RPAP…PTTT), 229–252 (QPFP…PPQQ), 305–322 (PAAP…PVPG), and 345–357 (GMPP…PRPQ). Residues 379–410 (SRGRPGDRRPVRQQRERTEEEKILRPQRRHVE) show a composition bias toward basic and acidic residues. Residues 499–668 (RRAPVVTIMG…LLVADMQDLK (170 aa)) enclose the tr-type G domain. Positions 508–515 (GHVDHGKT) are G1. Residue 508 to 515 (GHVDHGKT) participates in GTP binding. Residues 533 to 537 (GITQH) are G2. The tract at residues 554-557 (DTPG) is G3. Residues 554–558 (DTPGH) and 608–611 (NKID) contribute to the GTP site. The tract at residues 608 to 611 (NKID) is G4. A G5 region spans residues 644–646 (SAR).

Belongs to the TRAFAC class translation factor GTPase superfamily. Classic translation factor GTPase family. IF-2 subfamily.

The protein localises to the cytoplasm. Functionally, one of the essential components for the initiation of protein synthesis. Protects formylmethionyl-tRNA from spontaneous hydrolysis and promotes its binding to the 30S ribosomal subunits. Also involved in the hydrolysis of GTP during the formation of the 70S ribosomal complex. This chain is Translation initiation factor IF-2, found in Solibacter usitatus (strain Ellin6076).